Here is a 188-residue protein sequence, read N- to C-terminus: dCTP deaminase (188 aa).

107–112 (KSTYAR) is a dCTP binding site. The active-site Proton donor/acceptor is glutamate 133. DCTP-binding residues include glutamine 152, tyrosine 166, and glutamine 176.

Belongs to the dCTP deaminase family. As to quaternary structure, homotrimer.

The enzyme catalyses dCTP + H2O + H(+) = dUTP + NH4(+). It participates in pyrimidine metabolism; dUMP biosynthesis; dUMP from dCTP (dUTP route): step 1/2. In terms of biological role, catalyzes the deamination of dCTP to dUTP. In Sulfurovum sp. (strain NBC37-1), this protein is dCTP deaminase.